The sequence spans 426 residues: Serine--tRNA ligase (426 aa).

Residue 233 to 235 (TAE) coordinates L-serine. 264–266 (RSE) is a binding site for ATP. Position 287 (glutamate 287) interacts with L-serine. ATP is bound at residue 351-354 (EISS). L-serine is bound at residue serine 387.

It belongs to the class-II aminoacyl-tRNA synthetase family. Type-1 seryl-tRNA synthetase subfamily. As to quaternary structure, homodimer. The tRNA molecule binds across the dimer.

The protein localises to the cytoplasm. The enzyme catalyses tRNA(Ser) + L-serine + ATP = L-seryl-tRNA(Ser) + AMP + diphosphate + H(+). It carries out the reaction tRNA(Sec) + L-serine + ATP = L-seryl-tRNA(Sec) + AMP + diphosphate + H(+). It participates in aminoacyl-tRNA biosynthesis; selenocysteinyl-tRNA(Sec) biosynthesis; L-seryl-tRNA(Sec) from L-serine and tRNA(Sec): step 1/1. Catalyzes the attachment of serine to tRNA(Ser). Is also able to aminoacylate tRNA(Sec) with serine, to form the misacylated tRNA L-seryl-tRNA(Sec), which will be further converted into selenocysteinyl-tRNA(Sec). The sequence is that of Serine--tRNA ligase from Pseudomonas putida (strain W619).